A 349-amino-acid chain; its full sequence is Arginine kinase (349 aa).

The 83-residue stretch at 3 to 85 (DLAELWEKVS…LGPVILDYHK (83 aa)) folds into the Phosphagen kinase N-terminal domain. 58 to 62 (GVGVY) contributes to the substrate binding site. A Phosphagen kinase C-terminal domain is found at 113 to 349 (WIVSTRVRVG…EEIIKLEKAA (237 aa)). Residues 116 to 120 (STRVR) and histidine 179 each bind ATP. Residue glutamate 219 participates in substrate binding. Arginine 223 is a binding site for ATP. Cysteine 265 serves as a coordination point for substrate. ATP is bound by residues 274 to 278 (RASVH) and 302 to 307 (RGIHGE). Glutamate 307 contributes to the substrate binding site.

The protein belongs to the ATP:guanido phosphotransferase family.

The catalysed reaction is L-arginine + ATP = N(omega)-phospho-L-arginine + ADP + H(+). This is Arginine kinase from Liolophura japonica (Chiton).